Reading from the N-terminus, the 464-residue chain is Argininosuccinate lyase (464 aa).

It belongs to the lyase 1 family. Argininosuccinate lyase subfamily.

It localises to the cytoplasm. The catalysed reaction is 2-(N(omega)-L-arginino)succinate = fumarate + L-arginine. The protein operates within amino-acid biosynthesis; L-arginine biosynthesis; L-arginine from L-ornithine and carbamoyl phosphate: step 3/3. The polypeptide is Argininosuccinate lyase (Pseudomonas aeruginosa (strain ATCC 15692 / DSM 22644 / CIP 104116 / JCM 14847 / LMG 12228 / 1C / PRS 101 / PAO1)).